The chain runs to 741 residues: Phosphoribosylformylglycinamidine synthase subunit PurL (741 aa).

Histidine 54 is an active-site residue. Tyrosine 57 and lysine 98 together coordinate ATP. Glutamate 100 is a binding site for Mg(2+). Residues 101 to 104 and arginine 123 each bind substrate; that span reads SHNH. Catalysis depends on histidine 102, which acts as the Proton acceptor. Aspartate 124 is a binding site for Mg(2+). Glutamine 251 provides a ligand contact to substrate. Aspartate 279 lines the Mg(2+) pocket. 323 to 325 contacts substrate; the sequence is ESQ. The ATP site is built by aspartate 510 and glycine 547. Asparagine 548 is a Mg(2+) binding site. Serine 550 contacts substrate.

The protein belongs to the FGAMS family. As to quaternary structure, monomer. Part of the FGAM synthase complex composed of 1 PurL, 1 PurQ and 2 PurS subunits.

It is found in the cytoplasm. The enzyme catalyses N(2)-formyl-N(1)-(5-phospho-beta-D-ribosyl)glycinamide + L-glutamine + ATP + H2O = 2-formamido-N(1)-(5-O-phospho-beta-D-ribosyl)acetamidine + L-glutamate + ADP + phosphate + H(+). It participates in purine metabolism; IMP biosynthesis via de novo pathway; 5-amino-1-(5-phospho-D-ribosyl)imidazole from N(2)-formyl-N(1)-(5-phospho-D-ribosyl)glycinamide: step 1/2. Its function is as follows. Part of the phosphoribosylformylglycinamidine synthase complex involved in the purines biosynthetic pathway. Catalyzes the ATP-dependent conversion of formylglycinamide ribonucleotide (FGAR) and glutamine to yield formylglycinamidine ribonucleotide (FGAM) and glutamate. The FGAM synthase complex is composed of three subunits. PurQ produces an ammonia molecule by converting glutamine to glutamate. PurL transfers the ammonia molecule to FGAR to form FGAM in an ATP-dependent manner. PurS interacts with PurQ and PurL and is thought to assist in the transfer of the ammonia molecule from PurQ to PurL. In Picrophilus torridus (strain ATCC 700027 / DSM 9790 / JCM 10055 / NBRC 100828 / KAW 2/3), this protein is Phosphoribosylformylglycinamidine synthase subunit PurL.